Here is a 558-residue protein sequence, read N- to C-terminus: MARVEL domain-containing protein 2 (558 aa).

Residues 1 to 16 (MSNDGRSRNRDRRYDE) show a composition bias toward basic and acidic residues. Disordered stretches follow at residues 1 to 58 (MSND…PPFG) and 115 to 145 (CSPP…GTFS). Residues 1 to 194 (MSNDGRSRNR…YMKSWAGLLR (194 aa)) lie on the Cytoplasmic side of the membrane. Pro residues predominate over residues 45–58 (PLPPPPLPLQPPFG). A phosphoserine mark is found at S116, S120, and S161. T166 carries the phosphothreonine modification. In terms of domain architecture, MARVEL spans 188–367 (SWAGLLRILG…SALVCLKLWR (180 aa)). The helical transmembrane segment at 195–215 (ILGVVELLLGAGVFACVTAYI) threads the bilayer. Residues 216 to 223 (HKDSEWYN) lie on the Extracellular side of the membrane. The helical transmembrane segment at 224–244 (LFGYSQPYGMGGVGGLGSMYG) threads the bilayer. The Cytoplasmic portion of the chain corresponds to 245–254 (GYYYTGPKTP). A helical transmembrane segment spans residues 255–275 (FVLVVAGLAWITTIIILVLGM). Over 276–291 (SMYYRTILLDSNWWPL) the chain is Extracellular. Residues 292–312 (TEFGINVALFILYMAAAIVYV) traverse the membrane as a helical segment. Topologically, residues 313-319 (NDTNRGG) are cytoplasmic. A helical membrane pass occupies residues 320-337 (LCYYPLFNTPVNAVFCRV). Over 338 to 341 (EGGQ) the chain is Extracellular. The chain crosses the membrane as a helical span at residues 342-362 (IAAMIFLFVTMIVYLISALVC). Residues 363 to 558 (LKLWRHEAAR…VMNWDVQGYS (196 aa)) are Cytoplasmic-facing. S387 bears the Phosphoserine mark. K412 participates in a covalent cross-link: Glycyl lysine isopeptide (Lys-Gly) (interchain with G-Cter in ubiquitin). Residues 439–548 (MPDYVAKYPV…IKQRIQEYDK (110 aa)) adopt a coiled-coil conformation. In terms of domain architecture, OCEL spans 440-551 (PDYVAKYPVI…RIQEYDKVMN (112 aa)).

This sequence belongs to the ELL/occludin family. In terms of assembly, interacts with TJP1. Interacts with the ubiquitin ligase ITCH. Interacts (via C-terminal cytoplasmic domain) with LSR (via the cytoplasmic domain), ILDR1 and ILDR2; the interaction is required to recruit MARVELD2 to tricellular contacts. Ubiquitinated by ITCH; but this ubiquitination does not lead to proteasomal degradation. Polyubiquitinated at Lys-412 via 'Lys-63'-linked ubiquitin chains; deubiquitinated by USP53. Post-translationally, phosphorylated.

The protein localises to the cell membrane. It localises to the cell junction. The protein resides in the tight junction. Its function is as follows. Plays a role in the formation of tricellular tight junctions and of epithelial barriers. Required for normal hearing via its role in the separation of the endolymphatic and perilymphatic spaces of the organ of Corti in the inner ear, and for normal survival of hair cells in the organ of Corti. This chain is MARVEL domain-containing protein 2, found in Homo sapiens (Human).